The chain runs to 558 residues: Atlastin-1 (558 aa).

A disordered region spans residues 1–27 (MAKNRRDRNSWGGFSEKTYEWSSEEEE). The tract at residues 1–34 (MAKNRRDRNSWGGFSEKTYEWSSEEEEPVKKAGP) is N-terminal hypervariable region (HVR). Residues 1 to 449 (MAKNRRDRNS…NIFHAARTPA (449 aa)) are Cytoplasmic-facing. 3 positions are modified to phosphoserine: Ser10, Ser22, and Ser23. The GB1/RHD3-type G domain occupies 64–309 (DKEVVAVSVA…LIPWLLSPES (246 aa)). GDP contacts are provided by Arg77, Lys78, Gly79, Lys80, Ser81, Phe82, Gln148, Arg217, Asp218, Val276, and Asn279. Positions 77, 78, 79, 80, 81, and 82 each coordinate GTP. Residue Ser81 participates in Mg(2+) binding. Arg217, Asp218, and Val276 together coordinate GTP. The 3HB (three-helix bundle) domain stretch occupies residues 347-438 (MLQATAEANN…YIQYIKHNDS (92 aa)). Lys395 carries the N6-acetyllysine modification. A coiled-coil region spans residues 412 to 439 (EFSRRYLQQLESEIDELYIQYIKHNDSK). Positions 439-447 (KNIFHAART) are linker. Residues 450-470 (TLFVVIFITYVIAGVTGFIGL) form a helical membrane-spanning segment. Asp471 is a topological domain (lumenal). The helical transmembrane segment at 472 to 492 (IIASLCNMIMGLTLITLCTWA) threads the bilayer. Residues 493–558 (YIRYSGEYRE…STEQSEKKKM (66 aa)) lie on the Cytoplasmic side of the membrane. The tract at residues 521–558 (NEALYKLYSAAATHRHLYHQAFPTPKSESTEQSEKKKM) is autoinhibitory domain.

It belongs to the TRAFAC class dynamin-like GTPase superfamily. GB1/RHD3 GTPase family. GB1 subfamily. In terms of assembly, monomeric and homodimeric. The homodimer, transiently formed by two molecules on opposing membranes, is the active form mediating ER membrane fusion. Interacts with REEP1, REEP5, RTN3 and RTN4 (via the transmembrane region); these proteins are involved in endoplasmic reticulum tubular network organization. Interacts with ZFYVE27; both proteins are involved in endoplasmic reticulum tubular network organization. Interacts with ARL6IP1; both proteins are involved in endoplasmic reticulum tubular network organization. Interacts with SPAST; the interaction is direct, could recruit SPAST to Golgi membranes. Interacts (via N-terminal region) with MAP4K4 (via CNH regulatory domain). May interact with TMED2. Interacts with CPT1C. Post-translationally, phosphorylated. Phosphorylation, by different kinases, of the N-terminal hypervariable region (HVR) regulates the ATL1-mediated membrane tethering step.

Its subcellular location is the endoplasmic reticulum membrane. The protein localises to the golgi apparatus membrane. It is found in the cell projection. It localises to the axon. The catalysed reaction is GTP + H2O = GDP + phosphate + H(+). Atlastin-1 (ATL1) is a membrane-anchored GTPase that mediates the GTP-dependent fusion of endoplasmic reticulum (ER) membranes, maintaining the continuous ER network. It facilitates the formation of three-way junctions where ER tubules intersect. Two atlastin-1 on neighboring ER tubules bind GTP and form loose homodimers through the GB1/RHD3-type G domains and 3HB regions. Upon GTP hydrolysis, the 3HB regions tighten, pulling the membranes together to drive their fusion. After fusion, the homodimer disassembles upon release of inorganic phosphate (Pi). Subsequently, GDP dissociates, resetting the monomers to a conformation ready for a new fusion cycle. May also regulate more or less directly Golgi biogenesis. Indirectly regulates axonal development. The protein is Atlastin-1 of Macaca fascicularis (Crab-eating macaque).